The following is a 348-amino-acid chain: Mitogen-activated protein kinase 14B (348 aa).

Residues 25-309 form the Protein kinase domain; the sequence is YQNLSPVGSG…ASQALAHPYF (285 aa). ATP-binding positions include 31-39 and Lys54; that span reads VGSGAYGSV. The Proton acceptor role is filled by Asp169. Thr181 is modified (phosphothreonine; by MAP2K3). The TXY motif lies at 181 to 183; the sequence is TGY. Tyr183 carries the post-translational modification Phosphotyrosine; by MAP2K3.

This sequence belongs to the protein kinase superfamily. CMGC Ser/Thr protein kinase family. MAP kinase subfamily. The cofactor is Mg(2+). In terms of processing, dually phosphorylated on Thr-181 and Tyr-183, which activates the enzyme.

The protein resides in the cytoplasm. It localises to the nucleus. It carries out the reaction L-seryl-[protein] + ATP = O-phospho-L-seryl-[protein] + ADP + H(+). The enzyme catalyses L-threonyl-[protein] + ATP = O-phospho-L-threonyl-[protein] + ADP + H(+). Activated by threonine and tyrosine phosphorylation by the dual specificity kinase, MKK3. In terms of biological role, serine/threonine kinase which acts as an essential component of the MAP kinase signal transduction pathway. Mapk14b is one of the four p38 MAPKs which play an important role in the cascades of cellular responses evoked by extracellular stimuli such as pro-inflammatory cytokines or physical stress leading to direct activation of transcription factors. Accordingly, p38 MAPKs phosphorylate a broad range of proteins and it has been estimated that they may have approximately 200 to 300 substrates each. Some of the targets are downstream kinases which are activated through phosphorylation and further phosphorylate additional targets. This is Mitogen-activated protein kinase 14B (mapk14b) from Danio rerio (Zebrafish).